The chain runs to 649 residues: Arylsulfatase (649 aa).

Positions 1-22 (MLQRLVVALCLLGFAALTAAAA) are cleaved as a signal peptide. Ca(2+) is bound by residues Asp34 and Asp35. Asn41 carries N-linked (GlcNAc...) asparagine glycosylation. Cys72 contacts Ca(2+). Cys72 acts as the Nucleophile in catalysis. Position 72 is a 3-oxoalanine (Cys) (Cys72). Residues Asn89, Asn224, and Asn279 are each glycosylated (N-linked (GlcNAc...) asparagine). Residues Asp324 and Asn325 each contribute to the Ca(2+) site. 3 N-linked (GlcNAc...) asparagine glycosylation sites follow: Asn445, Asn489, and Asn531.

Belongs to the sulfatase family. Ca(2+) is required as a cofactor. Post-translationally, the conversion to 3-oxoalanine (also known as C-formylglycine, FGly), of a serine or cysteine residue in prokaryotes and of a cysteine residue in eukaryotes, is critical for catalytic activity.

The protein resides in the periplasm. The enzyme catalyses an aryl sulfate + H2O = a phenol + sulfate + H(+). Inhibited by Na(3)BO(3) and KCN. No inhibition by sodium dodecyl sulfate, even at high concentration. In terms of biological role, is commonly produced by soil microorganisms and plays an important role in the mineralization of sulfates. The protein is Arylsulfatase of Volvox carteri (Green alga).